Consider the following 439-residue polypeptide: MMYAPVEFSQTAYPRIEYQRRQQQFWDPIRLALFTLAIVAIVGITIGIVTHFVVEDDKSFYYLASFQVTSIKYRENYGIRSSREFIERSHQIERMMSRIFRRSSGVGRFIKSHVIKISPDEQGVNILIVLMFRYPSTDSAERIKKRIERTFYQSLKIKQLPLTISMPSFSLTPIDSKKMRNLLNSRCGIRMSSSNIPLPASSSTERIVQGRETAMEGEWPWQASLQLIGAGHQCGATLISNTWLLTAAHCFWKNRDPTKWIVTFGTTITPPLVKRSVGKIIIHEEYHRDTNENDIALAQLTTRVEFSNVVQRVCLPDSSMKLPPKTSVFVTGFGSIVDDGPTQNKLRQARVETIGSDVCNRKDVYDGLITPGMLCAGFMEGKIDACKGDSGGPLVYDNRDIWYIVGIVSWGQSCALPNKPGVYTRVTKYRDWIASKTGL.

At Met-1–Leu-33 the chain is on the cytoplasmic side. A helical; Signal-anchor for type II membrane protein membrane pass occupies residues Phe-34–Val-54. At Glu-55–Leu-439 the chain is on the extracellular side. The region spanning Lys-58–Ser-176 is the SEA domain. The 232-residue stretch at Ile-207–Gly-438 folds into the Peptidase S1 domain. Cysteines 234 and 250 form a disulfide. Active-site charge relay system residues include His-249 and Asp-294. Disulfide bonds link Cys-359–Cys-375 and Cys-386–Cys-414. The Charge relay system role is filled by Ser-390.

The protein belongs to the peptidase S1 family.

The protein resides in the membrane. Functionally, probable serine protease. In Mus musculus (Mouse), this protein is Transmembrane protease serine 11F (Tmprss11f).